A 259-amino-acid polypeptide reads, in one-letter code: UPF0246 protein Pfl01_0961 (259 aa).

This sequence belongs to the UPF0246 family.

This chain is UPF0246 protein Pfl01_0961, found in Pseudomonas fluorescens (strain Pf0-1).